We begin with the raw amino-acid sequence, 386 residues long: uncharacterized protein (386 aa).

Position 185 is an N6-(pyridoxal phosphate)lysine (lysine 185).

This sequence belongs to the DegT/DnrJ/EryC1 family. Pyridoxal 5'-phosphate serves as cofactor.

This is an uncharacterized protein from Methanocaldococcus jannaschii (strain ATCC 43067 / DSM 2661 / JAL-1 / JCM 10045 / NBRC 100440) (Methanococcus jannaschii).